A 443-amino-acid polypeptide reads, in one-letter code: Threonine/serine transporter TdcC (443 aa).

Transmembrane regions (helical) follow at residues 22–42 (TTWTLGLFGTAIGAGVLFFPI), 44–64 (AGFGGLIPILLMLVLAYPIAF), 97–117 (GVVITFLYFFAICPLLWIYGV), 140–160 (FVALFLLLLMAFVIWFGKDLM), 163–183 (VMSYLVWPFIASLVLISLSLI), 207–227 (ILVTVWLGISIMVFSFNFSPI), 259–279 (ASMLMVAVVMFFAFSCLFTLS), 319–339 (ASIIALVAIFKSFFGHYLGTL), 366–386 (ISMIFIMGSTWVVAYANPNIL), 389–409 (IEAMGAPIIASLLCLLPMYAI), and 423–443 (DNVFVTLIGLLTILNIVYKLF).

This sequence belongs to the amino acid/polyamine transporter 2 family. SdaC/TdcC subfamily.

The protein localises to the cell inner membrane. It carries out the reaction L-threonine(in) + H(+)(in) = L-threonine(out) + H(+)(out). The enzyme catalyses L-serine(in) + H(+)(in) = L-serine(out) + H(+)(out). Involved in the import of threonine and serine into the cell, with the concomitant import of a proton (symport system). The sequence is that of Threonine/serine transporter TdcC from Salmonella paratyphi A (strain ATCC 9150 / SARB42).